Consider the following 397-residue polypeptide: Succinate--CoA ligase [ADP-forming] subunit beta (397 aa).

Residues 9–254 (KALLKSFGAP…ETEQDAKELE (246 aa)) form the ATP-grasp domain. ATP contacts are provided by residues Lys46, 53-55 (GRG), Glu109, Ala112, and Glu117. Asn209 and Asp223 together coordinate Mg(2+). Substrate-binding positions include Asn274 and 331–333 (GIM).

Belongs to the succinate/malate CoA ligase beta subunit family. Heterotetramer of two alpha and two beta subunits. Requires Mg(2+) as cofactor.

It catalyses the reaction succinate + ATP + CoA = succinyl-CoA + ADP + phosphate. The enzyme catalyses GTP + succinate + CoA = succinyl-CoA + GDP + phosphate. The protein operates within carbohydrate metabolism; tricarboxylic acid cycle; succinate from succinyl-CoA (ligase route): step 1/1. Its function is as follows. Succinyl-CoA synthetase functions in the citric acid cycle (TCA), coupling the hydrolysis of succinyl-CoA to the synthesis of either ATP or GTP and thus represents the only step of substrate-level phosphorylation in the TCA. The beta subunit provides nucleotide specificity of the enzyme and binds the substrate succinate, while the binding sites for coenzyme A and phosphate are found in the alpha subunit. This is Succinate--CoA ligase [ADP-forming] subunit beta from Hyphomonas neptunium (strain ATCC 15444).